The chain runs to 65 residues: LRCLNCPEVFCRNFHTCRNGEKICFKRFDQRKLLGKRYTRGCAVTCPVAKPREIVECCSTDGCNR.

Disulfide bonds link cysteine 3–cysteine 24, cysteine 6–cysteine 11, cysteine 17–cysteine 42, cysteine 46–cysteine 57, and cysteine 58–cysteine 63.

The protein belongs to the three-finger toxin family. Ancestral subfamily. Orphan group II sub-subfamily. In terms of tissue distribution, expressed by the venom gland.

It localises to the secreted. In terms of biological role, binds with low affinity to muscular (alpha-1-beta-1-delta-epsilon/CHRNA1-CHRNB1-CHRND-CHRNE) and very low affinity to neuronal (alpha-7/CHRNA7) nicotinic acetylcholine receptor (nAChR). This is Weak toxin CM-10 from Naja nivea (Cape cobra).